The following is a 467-amino-acid chain: Probable glutamate decarboxylase gamma (467 aa).

At lysine 278 the chain carries N6-(pyridoxal phosphate)lysine.

Belongs to the group II decarboxylase family. The cofactor is pyridoxal 5'-phosphate.

It carries out the reaction L-glutamate + H(+) = 4-aminobutanoate + CO2. This Listeria innocua serovar 6a (strain ATCC BAA-680 / CLIP 11262) protein is Probable glutamate decarboxylase gamma.